The primary structure comprises 428 residues: MSCYICGRGHHAQRLPFLCPIDARNRLYEGRLAQAHTLIDSDRLKQQTNALIEQPPPTAAKASRSSPAARKAAIDDWASKHQEAIDRTAEIIAQADRLKAEVEAARQEIRQRKKTLARRKSDLAEAADGIEEKRKKQLDKVKDNIAATRADWDLVHESTASNRAFLCMEAARLYGLRRLKKGSSVKYELGGAEVVDLHALTGASPQAITISFSHIVHILNRACQYLAIRLPAEIILPHADYPRPAILSITSSYSYNHDDIPYPGTSDQQSELNTLPQDDLFYQRLPRARPLFIDRPLPVLAKEDPAMYSLFIEGVALLAHDVAWACCSQGVPVGPEDVLHVGRNLYNLLIGNQLLRGVSSNDGGNSTPQMGRYSHGAVHSYLGSAEGSDLVRTFRLPNPIKLADRLKSKLSSDAPNPDWELLEDDAWT.

Residues 82 to 143 are a coiled coil; it reads QEAIDRTAEI…RKKQLDKVKD (62 aa).

The protein belongs to the ATG14 family. In terms of assembly, component of the autophagy-specific VPS34 PI3-kinase complex I.

The protein localises to the preautophagosomal structure membrane. The protein resides in the vacuole membrane. Its function is as follows. Required for cytoplasm to vacuole transport (Cvt) and autophagy as a part of the autophagy-specific VPS34 PI3-kinase complex I. This complex is essential to recruit the ATG8-phosphatidylinositol conjugate and the ATG12-ATG5 conjugate to the pre-autophagosomal structure. ATG14 mediates the specific binding of the VPS34 PI3-kinase complex I to the preautophagosomal structure (PAS). Plays a crucial role in hyphal development, conidiogenesis and pathogenicity. Also required for glycogen mobilization, quantity of lipid bodies, and the turgor pressure of appressoria. In Pyricularia oryzae (strain 70-15 / ATCC MYA-4617 / FGSC 8958) (Rice blast fungus), this protein is Autophagy-related protein 14.